Here is a 416-residue protein sequence, read N- to C-terminus: MPPPPPNRREQATAAPSSTDKSETGAGAARKEDNIYIPSYISKQPFYVSGLDNEEGDSLLHQRARQQEEDKAAQAAALLARGKKAGPARTKWVKGACENCGAMGHKKKDCLERPRKFGAKATGKDIQADRIVRDVKLGYEAKRDVYSAYDPKQYMEVVEEYNMLEEARRALQGDQKTPDGEGADGPEDDKSGFKYDEESDMGRDRATTKQSMRIREDTAKYLLNLDSDSAKYNPKKRALVDAGAIADKSAALFAEESFLRASGEAAEFEKAQRYAWEAQERSGDTSLHLQANPTAGEILRKKESEEREAKRRKRAEELANQYGTQPVISDALRETIKESETFVEYDEAGLIKGAPKKVGKSKYLEDVYINNHTSVWGSWWSDFRWGYACCHSFVKNSYCTGEAGIAASEKADAWDK.

The disordered stretch occupies residues 1–34; the sequence is MPPPPPNRREQATAAPSSTDKSETGAGAARKEDN. The CCHC-type zinc finger occupies 95–112; sequence GACENCGAMGHKKKDCLE. Basic and acidic residues-rich tracts occupy residues 168–179 and 188–213; these read RRALQGDQKTPD and DDKS…QSMR. A disordered region spans residues 168 to 213; sequence RRALQGDQKTPDGEGADGPEDDKSGFKYDEESDMGRDRATTKQSMR.

It belongs to the SLU7 family. In terms of assembly, associated with the spliceosome.

It localises to the nucleus. In terms of biological role, involved in pre-mRNA splicing. The polypeptide is Pre-mRNA-splicing factor slu-7 (slu-7) (Neurospora crassa (strain ATCC 24698 / 74-OR23-1A / CBS 708.71 / DSM 1257 / FGSC 987)).